The following is a 416-amino-acid chain: F-box/FBD/LRR-repeat protein At1g13570 (416 aa).

The F-box domain maps to 5 to 53; sequence PDFISDLPQSIIENILTRLSIRDAIRTSVLSSKWRYKWSTLTDLVFDEK. LRR repeat units follow at residues 115–142, 164–189, 203–229, 238–263, and 294–321; these read VLKL…ELCH, QILV…SLSY, MYLY…SVSM, FEQS…VGYI, and CFED…KVSA. One can recognise an FBD domain in the interval 346–384; that stretch reads LPSLESVKITDASGIRYELEFIRFLLGTSPVLETVTVSS.

This is F-box/FBD/LRR-repeat protein At1g13570 from Arabidopsis thaliana (Mouse-ear cress).